Here is a 395-residue protein sequence, read N- to C-terminus: Mevalonate kinase (395 aa).

ATP-binding positions include Lys13, Asn55, Asn104, Ser135, and 140–146 (GAGLGSS). Catalysis depends on Ser146, which acts as the Proton donor. Residues Ser146 and Glu193 each coordinate Mg(2+). Asp204 functions as the Proton acceptor in the catalytic mechanism.

Belongs to the GHMP kinase family. Mevalonate kinase subfamily. As to quaternary structure, homodimer. Mg(2+) serves as cofactor.

It localises to the cytoplasm. The protein localises to the peroxisome. It catalyses the reaction (R)-mevalonate + ATP = (R)-5-phosphomevalonate + ADP + H(+). It participates in isoprenoid biosynthesis; isopentenyl diphosphate biosynthesis via mevalonate pathway; isopentenyl diphosphate from (R)-mevalonate: step 1/3. With respect to regulation, farnesyl pyrophosphate and geranyl pyrophosphate inhibit mevalonate kinase activity by binding competitively at the ATP-binding sites. Functionally, catalyzes the phosphorylation of mevalonate to mevalonate 5-phosphate, a key step in isoprenoid and cholesterol biosynthesis. The polypeptide is Mevalonate kinase (Mus musculus (Mouse)).